Reading from the N-terminus, the 349-residue chain is Phenylalanine--tRNA ligase alpha subunit (349 aa).

E258 serves as a coordination point for Mg(2+).

Belongs to the class-II aminoacyl-tRNA synthetase family. Phe-tRNA synthetase alpha subunit type 1 subfamily. In terms of assembly, tetramer of two alpha and two beta subunits. Requires Mg(2+) as cofactor.

The protein localises to the cytoplasm. The enzyme catalyses tRNA(Phe) + L-phenylalanine + ATP = L-phenylalanyl-tRNA(Phe) + AMP + diphosphate + H(+). The chain is Phenylalanine--tRNA ligase alpha subunit from Rickettsia conorii (strain ATCC VR-613 / Malish 7).